The chain runs to 158 residues: Probable host range protein 2-1 (158 aa).

Belongs to the poxviridae C7 protein family.

In terms of biological role, plays a role for multiplication of the virus in different cell types. The protein is Probable host range protein 2-1 of Oryctolagus cuniculus (Rabbit).